The chain runs to 347 residues: F-box/LRR-repeat/kelch-repeat protein At2g27520 (347 aa).

The F-box domain maps to 1-50; sequence MVRLDLPWDLVDEILSRLPATSLGRLRFTCKRWNALFKDPEFITKQFHKA. LRR repeat units lie at residues 59-82, 152-177, 196-220, and 261-285; these read LSNF…EIAQ, CKLV…NVEK, KFNI…LYQD, and LSWS…ILRI. The Kelch 1 repeat unit spans residues 138 to 187; the sequence is KSYDSYKILRITYGCKLVEIFELKSNSWRVLSKVHPNVEKHYYGGVSFKG. Residues 306–347 form a Kelch 2 repeat; the sequence is MIYIVGKNGFKKLSYEKDRSNLWRLPFFFSYVPSLVGLYPPM.

The sequence is that of F-box/LRR-repeat/kelch-repeat protein At2g27520 from Arabidopsis thaliana (Mouse-ear cress).